Reading from the N-terminus, the 860-residue chain is Leucine--tRNA ligase (860 aa).

The 'HIGH' region motif lies at proline 42–histidine 52. Positions lysine 619–serine 623 match the 'KMSKS' region motif. Lysine 622 contributes to the ATP binding site.

Belongs to the class-I aminoacyl-tRNA synthetase family.

It localises to the cytoplasm. It catalyses the reaction tRNA(Leu) + L-leucine + ATP = L-leucyl-tRNA(Leu) + AMP + diphosphate. In Histophilus somni (strain 2336) (Haemophilus somnus), this protein is Leucine--tRNA ligase.